The primary structure comprises 431 residues: Enolase (431 aa).

Glutamine 166 lines the (2R)-2-phosphoglycerate pocket. Glutamate 208 (proton donor) is an active-site residue. Aspartate 245, glutamate 289, and aspartate 316 together coordinate Mg(2+). The (2R)-2-phosphoglycerate site is built by lysine 341, arginine 370, serine 371, and lysine 392. Lysine 341 functions as the Proton acceptor in the catalytic mechanism.

The protein belongs to the enolase family. It depends on Mg(2+) as a cofactor.

The protein resides in the cytoplasm. The protein localises to the secreted. It localises to the cell surface. The enzyme catalyses (2R)-2-phosphoglycerate = phosphoenolpyruvate + H2O. Its pathway is carbohydrate degradation; glycolysis; pyruvate from D-glyceraldehyde 3-phosphate: step 4/5. Functionally, catalyzes the reversible conversion of 2-phosphoglycerate (2-PG) into phosphoenolpyruvate (PEP). It is essential for the degradation of carbohydrates via glycolysis. This chain is Enolase, found in Ruminiclostridium cellulolyticum (strain ATCC 35319 / DSM 5812 / JCM 6584 / H10) (Clostridium cellulolyticum).